Here is a 265-residue protein sequence, read N- to C-terminus: Tryptophan 2,3-dioxygenase (265 aa).

Residues 38–42 (FIVVH) and R104 each bind substrate. H223 contributes to the heme binding site. T237 provides a ligand contact to substrate.

Belongs to the tryptophan 2,3-dioxygenase family. Homotetramer. Heme serves as cofactor.

The enzyme catalyses L-tryptophan + O2 = N-formyl-L-kynurenine. The protein operates within amino-acid degradation; L-tryptophan degradation via kynurenine pathway; L-kynurenine from L-tryptophan: step 1/2. Functionally, heme-dependent dioxygenase that catalyzes the oxidative cleavage of the L-tryptophan (L-Trp) pyrrole ring and converts L-tryptophan to N-formyl-L-kynurenine. Catalyzes the oxidative cleavage of the indole moiety. This Anaeromyxobacter sp. (strain K) protein is Tryptophan 2,3-dioxygenase.